The following is a 169-amino-acid chain: Large ribosomal subunit protein uL10 (169 aa).

Belongs to the universal ribosomal protein uL10 family. In terms of assembly, part of the ribosomal stalk of the 50S ribosomal subunit. The N-terminus interacts with L11 and the large rRNA to form the base of the stalk. The C-terminus forms an elongated spine to which L12 dimers bind in a sequential fashion forming a multimeric L10(L12)X complex.

In terms of biological role, forms part of the ribosomal stalk, playing a central role in the interaction of the ribosome with GTP-bound translation factors. This is Large ribosomal subunit protein uL10 from Rickettsia akari (strain Hartford).